The sequence spans 303 residues: D-alanine--D-alanine ligase (303 aa).

Residues 104–300 form the ATP-grasp domain; it reads KLMWQAVGLP…FEKLVERVLE (197 aa). 132-187 serves as a coordination point for ATP; sequence IAKLGLPVFVKPSSEGSSVGVTKVKTVEQLLPAVEEALKFDSIVLVEAFLAGKEYS. Positions 254, 267, and 269 each coordinate Mg(2+).

Belongs to the D-alanine--D-alanine ligase family. Requires Mg(2+) as cofactor. Mn(2+) serves as cofactor.

The protein resides in the cytoplasm. It carries out the reaction 2 D-alanine + ATP = D-alanyl-D-alanine + ADP + phosphate + H(+). The protein operates within cell wall biogenesis; peptidoglycan biosynthesis. Cell wall formation. This Actinobacillus pleuropneumoniae serotype 5b (strain L20) protein is D-alanine--D-alanine ligase.